Consider the following 332-residue polypeptide: MSVVKSIELVLPKDAVYLAGCIIEGQVVLTLNSTLVDPIVKVELVGRGYVEWNEETGASRDYSREVICNNKADYVHKTKTFPVEDNWLSAGSHTFDFHFNLPPRLPSTFTSKIGNIFYFVQASCMGREHILAKKKIYLMVQGTSSIFHSEKSLQNPLFVEAEKKVSYNCCSQGTICLQIQMEKNTFTPGERDIFTTEINNQTSKCIKTVIFALYAHVHYEGFTPNAERRSRVDSSELLRQEANTHITAFNTTKIVSTFHLPPVLSVSGSGSQDSEIMNTQYELVSTVHLPWTLTSVKAKVPIIITSNPVDSNQTAAGCRTRAPLPVSPDQQN.

The disordered stretch occupies residues 311–332 (SNQTAAGCRTRAPLPVSPDQQN).

It belongs to the arrestin family.

The protein resides in the membrane. Its function is as follows. Plays an essential role in spermatogenesis. May be involved in the anchoring of the sperm head to the tail during spermatogenesis by affecting SEC22A-mediated SUN5 and NDC1 transport and localization. The protein is Arrestin domain-containing protein 5 (ARRDC5) of Bos taurus (Bovine).